The sequence spans 151 residues: Proline-rich acidic protein 1 (151 aa).

Residues 1 to 20 (MRRLLLVTSLVVVLLWEAGA) form the signal peptide. The disordered stretch occupies residues 71-151 (LTTEEKPRGQ…EDQDHIYHPQ (81 aa)).

In terms of assembly, interacts with isoform 1 and isoform 3 of MAD1L1. Interacts with MTTP. In terms of tissue distribution, highly expressed in the intestinal epithelial cells (at protein level). Abundantly expressed in the epithelial cells of the liver, kidney and cervix. Significantly down-regulated in hepatocellular carcinoma and right colon adenocarcinoma compared with the respective adjacent normal tissues. Expressed in epididymis (at protein level).

Its subcellular location is the secreted. The protein resides in the endoplasmic reticulum. Functionally, lipid-binding protein which promotes lipid absorption by facilitating MTTP-mediated lipid transfer (mainly triglycerides and phospholipids) and MTTP-mediated apoB lipoprotein assembly and secretion. Protects the gastrointestinal epithelium from irradiation-induced apoptosis. May play an important role in maintaining normal growth homeostasis in epithelial cells. Involved in p53/TP53-dependent cell survival after DNA damage. May down-regulate the expression of MAD1L1 and exert a suppressive role in mitotic spindle assembly checkpoint in hepatocellular carcinomas. The polypeptide is Proline-rich acidic protein 1 (PRAP1) (Homo sapiens (Human)).